A 371-amino-acid polypeptide reads, in one-letter code: Queuine tRNA-ribosyltransferase (371 aa).

Asp-90 (proton acceptor) is an active-site residue. Substrate-binding positions include 90–94, Asp-144, Gln-189, and Gly-215; that span reads DSGGF. The segment at 246 to 252 is RNA binding; sequence GVGTPEN. The active-site Nucleophile is the Asp-265. The tract at residues 270-274 is RNA binding; important for wobble base 34 recognition; the sequence is TRNAR. Zn(2+) is bound by residues Cys-303, Cys-305, Cys-308, and His-334.

The protein belongs to the queuine tRNA-ribosyltransferase family. As to quaternary structure, homodimer. Within each dimer, one monomer is responsible for RNA recognition and catalysis, while the other monomer binds to the replacement base PreQ1. The cofactor is Zn(2+).

It catalyses the reaction 7-aminomethyl-7-carbaguanine + guanosine(34) in tRNA = 7-aminomethyl-7-carbaguanosine(34) in tRNA + guanine. Its pathway is tRNA modification; tRNA-queuosine biosynthesis. In terms of biological role, catalyzes the base-exchange of a guanine (G) residue with the queuine precursor 7-aminomethyl-7-deazaguanine (PreQ1) at position 34 (anticodon wobble position) in tRNAs with GU(N) anticodons (tRNA-Asp, -Asn, -His and -Tyr). Catalysis occurs through a double-displacement mechanism. The nucleophile active site attacks the C1' of nucleotide 34 to detach the guanine base from the RNA, forming a covalent enzyme-RNA intermediate. The proton acceptor active site deprotonates the incoming PreQ1, allowing a nucleophilic attack on the C1' of the ribose to form the product. After dissociation, two additional enzymatic reactions on the tRNA convert PreQ1 to queuine (Q), resulting in the hypermodified nucleoside queuosine (7-(((4,5-cis-dihydroxy-2-cyclopenten-1-yl)amino)methyl)-7-deazaguanosine). This chain is Queuine tRNA-ribosyltransferase, found in Helicobacter pylori (strain HPAG1).